The chain runs to 162 residues: Protein A49 (162 aa).

This sequence belongs to the poxviridae A49 protein family.

In Homo sapiens (Human), this protein is Protein A49.